The sequence spans 412 residues: Multifunctional CCA protein (412 aa).

ATP contacts are provided by Gly-8 and Arg-11. CTP contacts are provided by Gly-8 and Arg-11. Mg(2+) is bound by residues Asp-21 and Asp-23. ATP-binding residues include Arg-91, Arg-137, and Arg-140. The CTP site is built by Arg-91, Arg-137, and Arg-140. The HD domain maps to 228–329; sequence TGIHTLMTLS…VKLFDSIDAW (102 aa).

The protein belongs to the tRNA nucleotidyltransferase/poly(A) polymerase family. Bacterial CCA-adding enzyme type 1 subfamily. As to quaternary structure, monomer. Can also form homodimers and oligomers. Mg(2+) serves as cofactor. Requires Ni(2+) as cofactor.

The enzyme catalyses a tRNA precursor + 2 CTP + ATP = a tRNA with a 3' CCA end + 3 diphosphate. It catalyses the reaction a tRNA with a 3' CCA end + 2 CTP + ATP = a tRNA with a 3' CCACCA end + 3 diphosphate. In terms of biological role, catalyzes the addition and repair of the essential 3'-terminal CCA sequence in tRNAs without using a nucleic acid template. Adds these three nucleotides in the order of C, C, and A to the tRNA nucleotide-73, using CTP and ATP as substrates and producing inorganic pyrophosphate. tRNA 3'-terminal CCA addition is required both for tRNA processing and repair. Also involved in tRNA surveillance by mediating tandem CCA addition to generate a CCACCA at the 3' terminus of unstable tRNAs. While stable tRNAs receive only 3'-terminal CCA, unstable tRNAs are marked with CCACCA and rapidly degraded. The polypeptide is Multifunctional CCA protein (Escherichia coli O139:H28 (strain E24377A / ETEC)).